A 295-amino-acid chain; its full sequence is Putative attaching and effacing protein homolog (295 aa).

An N-terminal signal peptide occupies residues 1–25 (MSHYKTGHKQPRFRYSVLARCVAWA).

Belongs to the intimin/invasin family.

The sequence is that of Putative attaching and effacing protein homolog (eaeH) from Escherichia coli (strain K12).